Reading from the N-terminus, the 247-residue chain is tRNA uridine(34) hydroxylase (247 aa).

Positions 124–218 (TQQDVIVIDT…YLEDTQNKNN (95 aa)) constitute a Rhodanese domain. C178 functions as the Cysteine persulfide intermediate in the catalytic mechanism.

This sequence belongs to the TrhO family.

It carries out the reaction uridine(34) in tRNA + AH2 + O2 = 5-hydroxyuridine(34) in tRNA + A + H2O. In terms of biological role, catalyzes oxygen-dependent 5-hydroxyuridine (ho5U) modification at position 34 in tRNAs. This is tRNA uridine(34) hydroxylase from Rickettsia conorii (strain ATCC VR-613 / Malish 7).